The following is a 143-amino-acid chain: Large ribosomal subunit protein uL11 (143 aa).

Belongs to the universal ribosomal protein uL11 family. As to quaternary structure, part of the ribosomal stalk of the 50S ribosomal subunit. Interacts with L10 and the large rRNA to form the base of the stalk. L10 forms an elongated spine to which L12 dimers bind in a sequential fashion forming a multimeric L10(L12)X complex. One or more lysine residues are methylated.

Its function is as follows. Forms part of the ribosomal stalk which helps the ribosome interact with GTP-bound translation factors. This chain is Large ribosomal subunit protein uL11, found in Azotobacter vinelandii (strain DJ / ATCC BAA-1303).